The chain runs to 362 residues: Phosphoserine aminotransferase (362 aa).

Positions 9 and 42 each coordinate L-glutamate. Residues 76–77, W102, T153, D174, and Q197 each bind pyridoxal 5'-phosphate; that span reads GR. K198 carries the post-translational modification N6-(pyridoxal phosphate)lysine. 239 to 240 contributes to the pyridoxal 5'-phosphate binding site; sequence NT.

It belongs to the class-V pyridoxal-phosphate-dependent aminotransferase family. SerC subfamily. Homodimer. The cofactor is pyridoxal 5'-phosphate.

It is found in the cytoplasm. It catalyses the reaction O-phospho-L-serine + 2-oxoglutarate = 3-phosphooxypyruvate + L-glutamate. The enzyme catalyses 4-(phosphooxy)-L-threonine + 2-oxoglutarate = (R)-3-hydroxy-2-oxo-4-phosphooxybutanoate + L-glutamate. It functions in the pathway amino-acid biosynthesis; L-serine biosynthesis; L-serine from 3-phospho-D-glycerate: step 2/3. The protein operates within cofactor biosynthesis; pyridoxine 5'-phosphate biosynthesis; pyridoxine 5'-phosphate from D-erythrose 4-phosphate: step 3/5. Its function is as follows. Catalyzes the reversible conversion of 3-phosphohydroxypyruvate to phosphoserine and of 3-hydroxy-2-oxo-4-phosphonooxybutanoate to phosphohydroxythreonine. The chain is Phosphoserine aminotransferase from Shigella dysenteriae serotype 1 (strain Sd197).